We begin with the raw amino-acid sequence, 211 residues long: ATP phosphoribosyltransferase (211 aa).

This sequence belongs to the ATP phosphoribosyltransferase family. Short subfamily. As to quaternary structure, heteromultimer composed of HisG and HisZ subunits.

The protein resides in the cytoplasm. The enzyme catalyses 1-(5-phospho-beta-D-ribosyl)-ATP + diphosphate = 5-phospho-alpha-D-ribose 1-diphosphate + ATP. It functions in the pathway amino-acid biosynthesis; L-histidine biosynthesis; L-histidine from 5-phospho-alpha-D-ribose 1-diphosphate: step 1/9. Functionally, catalyzes the condensation of ATP and 5-phosphoribose 1-diphosphate to form N'-(5'-phosphoribosyl)-ATP (PR-ATP). Has a crucial role in the pathway because the rate of histidine biosynthesis seems to be controlled primarily by regulation of HisG enzymatic activity. The polypeptide is ATP phosphoribosyltransferase (Bacillus cereus (strain 03BB102)).